Reading from the N-terminus, the 495-residue chain is ESX-2 secretion system ATPase EccB2 (495 aa).

The helical transmembrane segment at 43-63 threads the bilayer; that stretch reads LALSMVLVAIAAGWMMLLNVL.

This sequence belongs to the EccB family. Part of the ESX-2 / type VII secretion system (T7SS), which is composed of cytosolic and membrane components.

The protein localises to the cell membrane. Functionally, an ATPase. In Mycobacterium tuberculosis (strain CDC 1551 / Oshkosh), this protein is ESX-2 secretion system ATPase EccB2 (eccB2).